The sequence spans 308 residues: UDP-N-acetylenolpyruvoylglucosamine reductase 2 (308 aa).

The FAD-binding PCMH-type domain occupies 31 to 197 (RIGGPADYLV…AEVVMALRPA (167 aa)). Arginine 176 is a catalytic residue. Catalysis depends on serine 226, which acts as the Proton donor. Glutamate 296 is a catalytic residue.

This sequence belongs to the MurB family. Requires FAD as cofactor.

The protein localises to the cytoplasm. It catalyses the reaction UDP-N-acetyl-alpha-D-muramate + NADP(+) = UDP-N-acetyl-3-O-(1-carboxyvinyl)-alpha-D-glucosamine + NADPH + H(+). It functions in the pathway cell wall biogenesis; peptidoglycan biosynthesis. Functionally, cell wall formation. The polypeptide is UDP-N-acetylenolpyruvoylglucosamine reductase 2 (Symbiobacterium thermophilum (strain DSM 24528 / JCM 14929 / IAM 14863 / T)).